The primary structure comprises 308 residues: tRNA dimethylallyltransferase 2 (308 aa).

ATP is bound at residue 13-20; it reads GPTASGKT. 15-20 lines the substrate pocket; that stretch reads TASGKT. The tract at residues 38–41 is interaction with substrate tRNA; sequence DSRQ.

It belongs to the IPP transferase family. In terms of assembly, monomer. The cofactor is Mg(2+).

The catalysed reaction is adenosine(37) in tRNA + dimethylallyl diphosphate = N(6)-dimethylallyladenosine(37) in tRNA + diphosphate. Functionally, catalyzes the transfer of a dimethylallyl group onto the adenine at position 37 in tRNAs that read codons beginning with uridine, leading to the formation of N6-(dimethylallyl)adenosine (i(6)A). This is tRNA dimethylallyltransferase 2 from Bacteroides fragilis (strain YCH46).